The sequence spans 97 residues: Lipolysis-activating peptide 1-alpha chain (97 aa).

The first 21 residues, 1-21 (MNIMLFCSVFILVSLTGLSVS), serve as a signal peptide directing secretion. Positions 25–88 (PGNYPMSLYG…FWAAHKNHCK (64 aa)) constitute an LCN-type CS-alpha/beta domain. 3 disulfide bridges follow: C39-C62, C48-C67, and C52-C69.

Belongs to the long (3 C-C) scorpion toxin superfamily. As to quaternary structure, monomer (edited version) and heterodimer (non-edited version) of this alpha chain and a beta chain (AC P0CI43). As to expression, expressed by the venom gland.

Its subcellular location is the secreted. The heterodimer non-edited LVP1 induces lipolysis in rat adipocytes. Induction of lipolysis by LVP1 appears to be mediated through the beta-2 adrenergic receptor pathway (ADRB2). In terms of biological role, the edited BmKBTx-like, similar to beta-toxins, may modulate voltage-gated sodium channels (Nav) and may block voltage-gated potassium channels (Kv). The protein is Lipolysis-activating peptide 1-alpha chain of Lychas mucronatus (Chinese swimming scorpion).